Reading from the N-terminus, the 240-residue chain is Uridylate kinase (240 aa).

Position 12-15 (Lys-12–Gly-15) interacts with ATP. The involved in allosteric activation by GTP stretch occupies residues Gly-20–Gly-25. UMP is bound at residue Gly-54. ATP is bound by residues Gly-55 and Arg-59. UMP contacts are provided by residues Asp-74 and Thr-135–Thr-142. ATP contacts are provided by Asn-163, Tyr-169, and Asp-172.

The protein belongs to the UMP kinase family. As to quaternary structure, homohexamer. Interacts with BrxC.

It is found in the cytoplasm. It carries out the reaction UMP + ATP = UDP + ADP. Its pathway is pyrimidine metabolism; CTP biosynthesis via de novo pathway; UDP from UMP (UMPK route): step 1/1. Allosterically activated by GTP. Can also be activated by dGTP and 3'-anthraniloyl-2'-deoxyguanosine-5'-triphosphate (Ant-dGTP). Inhibited by UTP, 5-bromo-UTP and 5-iodo-UTP. In terms of biological role, catalyzes the reversible phosphorylation of UMP to UDP, with ATP or dATP as the most efficient phosphate donors. Is also able to phosphorylate 5-fluoro-UMP and 6-aza-UMP. The sequence is that of Uridylate kinase (pyrH) from Bacillus subtilis (strain 168).